The following is a 364-amino-acid chain: Anthranilate N-methyltransferase (364 aa).

The tract at residues 1-20 (MGSLSESHTQYKHGVEVEED) is disordered. S-adenosyl-L-methionine-binding residues include G209, D232, M253, and K266. The active-site Proton acceptor is H270.

This sequence belongs to the class I-like SAM-binding methyltransferase superfamily. Cation-independent O-methyltransferase family. COMT subfamily. In terms of assembly, homodimer. As to expression, expressed in leaves, flowers, stems and roots. Detected in the vascular tissues in stems, in the rhizodermis or the endodermis of roots, in the inside of carpels, in the central vascular bundles of the syncarp ovary and in the secretory oil glands located around the outer ovary wall.

The catalysed reaction is anthranilate + S-adenosyl-L-methionine = N-methylanthranilate + S-adenosyl-L-homocysteine + H(+). With respect to regulation, inhibited by Ca(2+), Co(2+), Fe(2+), Fe(3+), Cu(2+) or Zn(2+). No effect of Mg(2+). Functionally, involved in the biosynthesis of acridine alkaloids. N-methyltransferase with a strict substrate specificity for anthranilate. No activity with anthranilic acid methyl ester, anthraniloyl CoA, 3- or 4-amino-benzoic acid, salicylic acid, catechol, eugenol, caffeic acid, quercetin, theobromin, theophyllin, putrescine and nicotinic acid among others. In Ruta graveolens (Common rue), this protein is Anthranilate N-methyltransferase.